We begin with the raw amino-acid sequence, 257 residues long: Glutamate racemase (257 aa).

Residues 12–13 (DS) and 44–45 (YG) each bind substrate. Cys-75 functions as the Proton donor/acceptor in the catalytic mechanism. Residue 76–77 (NT) coordinates substrate. Cys-176 functions as the Proton donor/acceptor in the catalytic mechanism. 177 to 178 (TH) contacts substrate.

This sequence belongs to the aspartate/glutamate racemases family.

The catalysed reaction is L-glutamate = D-glutamate. It functions in the pathway cell wall biogenesis; peptidoglycan biosynthesis. In terms of biological role, provides the (R)-glutamate required for cell wall biosynthesis. The polypeptide is Glutamate racemase (Thermus thermophilus (strain ATCC 27634 / DSM 579 / HB8)).